A 339-amino-acid chain; its full sequence is N-acetyl-gamma-glutamyl-phosphate reductase (339 aa).

Cys-145 is a catalytic residue.

Belongs to the NAGSA dehydrogenase family. Type 1 subfamily.

The protein localises to the cytoplasm. It carries out the reaction N-acetyl-L-glutamate 5-semialdehyde + phosphate + NADP(+) = N-acetyl-L-glutamyl 5-phosphate + NADPH + H(+). It functions in the pathway amino-acid biosynthesis; L-arginine biosynthesis; N(2)-acetyl-L-ornithine from L-glutamate: step 3/4. Catalyzes the NADPH-dependent reduction of N-acetyl-5-glutamyl phosphate to yield N-acetyl-L-glutamate 5-semialdehyde. The polypeptide is N-acetyl-gamma-glutamyl-phosphate reductase (Kosmotoga olearia (strain ATCC BAA-1733 / DSM 21960 / TBF 19.5.1)).